Reading from the N-terminus, the 529-residue chain is MTILSAERAPSRRILAVVTVGRYTCAAPILEICRILHARGHTIEFACLDGHQGLATPHAFVSKIHVVGRNMTVEEDKALYRLFDESDASNAEGRKGTFRALMKFHSWWPETYRNLKALVSDPAYRPDFILADLLADACIDIMNEFEIPLAVHYPQMPIQMAPQKYIPGMPGAQLKHLSSEHASLWDRLQEEYHVLQLIFAMKDYILFQRKMRREMGLGPRPPPRKPDYLVLVNSFFGLEVPKDLPPLMIPIGPVLADTFTPLDTTPELLNFLQVHRKVIYVAFGSHVELPAWRVRRLIKGLVQALESGDIDGVIWAWKDRASVMKDLESDPSSIDDAKVEYSAILDNRNEGFKIVGWVPQRAILDHSSVCLYLSHCGASSTMEAVYHGVPVVAMPVYGDQLANGKRLEAAGVGINMNRKNFTAEELSANIKTLVRDEQGSFARNVLRLQRIATANSRRKYVAADRIEEVMYDAELLSSDEAVVSRPMHLQTPDSRMSWFKANNLDLYLVYIALFAVPVGAVRWISNNWL.

Residues Asn-70 and Asn-420 are each glycosylated (N-linked (GlcNAc...) asparagine). A helical transmembrane segment spans residues 504–524; that stretch reads LDLYLVYIALFAVPVGAVRWI.

Belongs to the glycosyltransferase 28 family.

It localises to the membrane. The catalysed reaction is stromemycin aglycone + UDP-alpha-D-glucose = stromemycin + UDP + H(+). It participates in mycotoxin biosynthesis. In terms of biological role, UDP-glycosyltransferase; part of the gene cluster that mediates the biosynthesis of stromemycin, a depside C-glucoside with two unsaturated C9 side chains belonging to aromatic polyketide glycosides. Acts as the tailoring enzyme responsible for 3-C-glucosylation of bininalkenylresorcylic acid to yield stromemycin. The protein is UDP-glycosyltransferase of Talaromyces amestolkiae.